Consider the following 451-residue polypeptide: Protoheme IX farnesyltransferase, mitochondrial (451 aa).

The next 6 helical transmembrane spans lie at 149–169 (TILV…PATV), 240–260 (PTVA…YTSL), 265–285 (IINT…GWAA), 289–309 (LTHP…FPHF), 339–359 (VALR…YFNI), and 414–434 (KAFF…ILHK).

This sequence belongs to the UbiA prenyltransferase family.

It localises to the mitochondrion membrane. Functionally, converts protoheme IX and farnesyl diphosphate to heme O. The polypeptide is Protoheme IX farnesyltransferase, mitochondrial (COX10) (Candida glabrata (strain ATCC 2001 / BCRC 20586 / JCM 3761 / NBRC 0622 / NRRL Y-65 / CBS 138) (Yeast)).